Reading from the N-terminus, the 362-residue chain is Erythritol/L-threitol dehydrogenase (362 aa).

Zn(2+) contacts are provided by Cys45, His76, Glu77, Cys109, Cys112, Cys115, and Cys123. Residues Ile195 and Asp215 each coordinate NAD(+).

The protein belongs to the zinc-containing alcohol dehydrogenase family. Requires Zn(2+) as cofactor.

It carries out the reaction erythritol + NAD(+) = D-erythrulose + NADH + H(+). It catalyses the reaction L-threitol + NAD(+) = L-erythrulose + NADH + H(+). The protein operates within carbohydrate metabolism; erythritol degradation. Its pathway is carbohydrate metabolism; L-threitol degradation. Its function is as follows. Catalyzes the NAD-dependent reversible oxidation of erythritol and L-threitol. Involved in the degradation pathways of erythritol and L-threitol, that allow M.smegmatis to grow on these compounds as the sole carbon source. This chain is Erythritol/L-threitol dehydrogenase, found in Mycolicibacterium smegmatis (strain ATCC 700084 / mc(2)155) (Mycobacterium smegmatis).